Here is a 574-residue protein sequence, read N- to C-terminus: UvrABC system protein C (574 aa).

The GIY-YIG domain maps to lysine 12 to isoleucine 92. Positions glutamate 200–leucine 235 constitute a UVR domain.

This sequence belongs to the UvrC family. Interacts with UvrB in an incision complex.

It localises to the cytoplasm. Functionally, the UvrABC repair system catalyzes the recognition and processing of DNA lesions. UvrC both incises the 5' and 3' sides of the lesion. The N-terminal half is responsible for the 3' incision and the C-terminal half is responsible for the 5' incision. The chain is UvrABC system protein C from Petrotoga mobilis (strain DSM 10674 / SJ95).